The sequence spans 2715 residues: Cilia- and flagella-associated protein 46 (2715 aa).

10 TPR repeats span residues 89–122, 175–208, 261–295, 324–359, 426–459, 469–503, 807–845, 936–969, 1111–1144, and 1174–1211; these read CRAQ…AKGE, AELM…IKSH, GDIS…LLFE, PGKL…AQLD, CQVH…DSLG, STRL…TPKD, SRKF…TNGS, LQTL…GIKY, AALY…LPRT, and AESE…LQKP. The interval 1356-1412 is disordered; that stretch reads SHLLLPKKEKENERSKEKEKERSKEKENERSKEKDKEKGKEEKVKEPKQSQSPAPIK. Positions 1361–1403 are enriched in basic and acidic residues; the sequence is PKKEKENERSKEKEKERSKEKENERSKEKDKEKGKEEKVKEPK. Residues 1362–1401 adopt a coiled-coil conformation; sequence KKEKENERSKEKEKERSKEKENERSKEKDKEKGKEEKVKE. The TPR 11 repeat unit spans residues 1639–1672; sequence AQCLLLLAQLANKEKNYGQAKKMIAQAQHLGGSE. A coiled-coil region spans residues 1781–1810; sequence VDVKLERAKIKRLRAQNEKDEEQKTAYYLE. Disordered regions lie at residues 2000–2023, 2294–2319, and 2371–2399; these read EEEG…EHCR, AVVA…HSTV, and ETEG…KGSI. Composition is skewed to basic and acidic residues over residues 2300–2311 and 2371–2383; these read GKSKGKDKERKT and ETEG…GRSR. Basic residues predominate over residues 2384 to 2398; the sequence is DPKKRSLAKKGRKGS. 2 TPR repeats span residues 2399 to 2432 and 2504 to 2537; these read IPRT…EMLT and VAVL…EANW. Residues 2541–2567 are disordered; it reads ASPSEDEWRRGGEPRRGFSDLEGQAAA. The span at 2546–2559 shows a compositional bias: basic and acidic residues; it reads DEWRRGGEPRRGFS.

Belongs to the CFAP46 family.

Its subcellular location is the cytoplasm. The protein localises to the cytoskeleton. The protein resides in the cilium axoneme. In terms of biological role, as part of the central apparatus of the cilium axoneme plays a role in cilium movement. The polypeptide is Cilia- and flagella-associated protein 46 (Homo sapiens (Human)).